Reading from the N-terminus, the 396-residue chain is Vacuolar protease A (396 aa).

An N-terminal signal peptide occupies residues 1 to 17 (MKGALLTAAMLLGSAQA). The propeptide at 18-70 (GVHTMKLKKVPLAEQLESVPIDVQVQHLGQKYTGLRTESHTQAMFKATDAQVS) is activation peptide. The Peptidase A1 domain occupies 85–392 (YFSEITIGTP…DLGADTVGIA (308 aa)). Aspartate 103 is an active-site residue. Cysteine 116 and cysteine 121 form a disulfide bridge. Asparagine 138 carries N-linked (GlcNAc...) asparagine glycosylation. The active site involves aspartate 284. An intrachain disulfide couples cysteine 318 to cysteine 351. Asparagine 335 carries N-linked (GlcNAc...) asparagine glycosylation.

Belongs to the peptidase A1 family.

The protein localises to the vacuole. The sequence is that of Vacuolar protease A (pep-4) from Neurospora crassa (strain ATCC 24698 / 74-OR23-1A / CBS 708.71 / DSM 1257 / FGSC 987).